The sequence spans 245 residues: Precorrin-2 C(20)-methyltransferase (245 aa).

It belongs to the precorrin methyltransferase family. Homodimer.

It carries out the reaction precorrin-2 + S-adenosyl-L-methionine = precorrin-3A + S-adenosyl-L-homocysteine + H(+). It participates in cofactor biosynthesis; adenosylcobalamin biosynthesis; cob(II)yrinate a,c-diamide from precorrin-2 (aerobic route): step 1/10. In terms of biological role, methylates precorrin-2 at the C-20 position to produce precorrin-3A. This Sinorhizobium sp protein is Precorrin-2 C(20)-methyltransferase (cobI).